The chain runs to 177 residues: Large ribosomal subunit protein uL6 (177 aa).

It belongs to the universal ribosomal protein uL6 family. Part of the 50S ribosomal subunit.

Its function is as follows. This protein binds to the 23S rRNA, and is important in its secondary structure. It is located near the subunit interface in the base of the L7/L12 stalk, and near the tRNA binding site of the peptidyltransferase center. This Polynucleobacter necessarius subsp. necessarius (strain STIR1) protein is Large ribosomal subunit protein uL6.